The following is a 114-amino-acid chain: Fumarate reductase subunit D (114 aa).

3 helical membrane-spanning segments follow: residues 27-47 (ICFP…LIPM), 50-70 (IIVF…TIFP), and 94-114 (WLFY…VIAL).

It belongs to the FrdD family. As to quaternary structure, part of an enzyme complex containing four subunits: a flavoprotein (FrdA), an iron-sulfur protein (FrdB), and two hydrophobic anchor proteins (FrdC and FrdD).

Its subcellular location is the cell inner membrane. Anchors the catalytic components of the fumarate reductase complex to the cell membrane, binds quinones. In Haemophilus ducreyi (strain 35000HP / ATCC 700724), this protein is Fumarate reductase subunit D.